Consider the following 355-residue polypeptide: Chorismate synthase (355 aa).

Arg48 provides a ligand contact to NADP(+). FMN-binding positions include 125 to 127 (RSS), 239 to 240 (NA), Gly280, 295 to 299 (KPVAT), and Arg321.

It belongs to the chorismate synthase family. As to quaternary structure, homotetramer. FMNH2 is required as a cofactor.

The catalysed reaction is 5-O-(1-carboxyvinyl)-3-phosphoshikimate = chorismate + phosphate. The protein operates within metabolic intermediate biosynthesis; chorismate biosynthesis; chorismate from D-erythrose 4-phosphate and phosphoenolpyruvate: step 7/7. Catalyzes the anti-1,4-elimination of the C-3 phosphate and the C-6 proR hydrogen from 5-enolpyruvylshikimate-3-phosphate (EPSP) to yield chorismate, which is the branch point compound that serves as the starting substrate for the three terminal pathways of aromatic amino acid biosynthesis. This reaction introduces a second double bond into the aromatic ring system. This Flavobacterium psychrophilum (strain ATCC 49511 / DSM 21280 / CIP 103535 / JIP02/86) protein is Chorismate synthase.